A 764-amino-acid polypeptide reads, in one-letter code: 5-methyltetrahydropteroyltriglutamate--homocysteine methyltransferase (764 aa).

Residues 16-19 (RELK) and K117 each bind 5-methyltetrahydropteroyltri-L-glutamate. Residues 442–444 (IGS) and E495 each bind L-homocysteine. Residues 442–444 (IGS) and E495 contribute to the L-methionine site. 5-methyltetrahydropteroyltri-L-glutamate is bound by residues 526 to 527 (RC) and W572. An L-homocysteine-binding site is contributed by D610. D610 provides a ligand contact to L-methionine. E616 provides a ligand contact to 5-methyltetrahydropteroyltri-L-glutamate. Zn(2+)-binding residues include H652, C654, and E676. Residue H705 is the Proton donor of the active site. Residue C737 coordinates Zn(2+).

This sequence belongs to the vitamin-B12 independent methionine synthase family. The cofactor is Zn(2+).

The catalysed reaction is 5-methyltetrahydropteroyltri-L-glutamate + L-homocysteine = tetrahydropteroyltri-L-glutamate + L-methionine. It functions in the pathway amino-acid biosynthesis; L-methionine biosynthesis via de novo pathway; L-methionine from L-homocysteine (MetE route): step 1/1. Functionally, catalyzes the transfer of a methyl group from 5-methyltetrahydrofolate to homocysteine resulting in methionine formation. The protein is 5-methyltetrahydropteroyltriglutamate--homocysteine methyltransferase of Bordetella bronchiseptica (strain ATCC BAA-588 / NCTC 13252 / RB50) (Alcaligenes bronchisepticus).